Reading from the N-terminus, the 311-residue chain is MPAPRAPRALAAAAPASGKAKLTHPGKAILAGGLAGGIEICITFPTEYVKTQLQLDERSHPPRYRGIGDCVRQTVRSHGVLGLYRGLSSLLYGSIPKAAVRFGMFEFLSNHMRDAQGRLDSTRGLLCGLGAGVAEAVVVVCPMETIKVKFIHDQTSPNPKYRGFFHGVREIVREQGLKGTYQGLTATVLKQGSNQAIRFFVMTSLRNWYRGDNPNKPMNPLITGVFGAIAGAASVFGNTPLDVIKTRMQGLEAHKYRNTWDCGLQILKKEGLKAFYKGTVPRLGRVCLDVAIVFVIYDEVVKLLNKVWKTD.

Positions 1–13 (MPAPRAPRALAAA) are cleaved as a propeptide — removed in mature form. 3 Solcar repeats span residues 23 to 111 (THPG…LSNH), 122 to 208 (TRGL…LRNW), and 218 to 303 (MNPL…VVKL). 3 helical membrane passes run 29–46 (ILAG…TFPT), 86–105 (GLSS…FGMF), and 129–143 (LGAG…VCPM). At Ser-156 the chain carries Phosphoserine. The next 3 helical transmembrane spans lie at 183-202 (GLTA…FFVM), 224-241 (GVFG…NTPL), and 278-297 (GTVP…FVIY).

The protein belongs to the mitochondrial carrier (TC 2.A.29) family. Possesses a short cleavable presequence, which, however, is found to be dispensable both for targeting to mitochondria and insertion into the inner membrane. However, the presequence is required to keep SLC25A1 in a soluble state and thus in an import-competent state. Mature SLC25A1 lacking the presequence is prone to aggregation.

It is found in the mitochondrion inner membrane. It catalyses the reaction (S)-malate(in) + citrate(out) = (S)-malate(out) + citrate(in). The enzyme catalyses D-threo-isocitrate(in) + citrate(out) = D-threo-isocitrate(out) + citrate(in). The catalysed reaction is citrate(out) + succinate(in) = citrate(in) + succinate(out). It carries out the reaction cis-aconitate(in) + citrate(out) = cis-aconitate(out) + citrate(in). It catalyses the reaction trans-aconitate(in) + citrate(out) = trans-aconitate(out) + citrate(in). The enzyme catalyses phosphoenolpyruvate(in) + citrate(out) = phosphoenolpyruvate(out) + citrate(in). The catalysed reaction is maleate(in) + citrate(out) = maleate(out) + citrate(in). Its function is as follows. Mitochondrial electroneutral antiporter that exports citrate from the mitochondria into the cytosol in exchange for malate. Also able to mediate the exchange of citrate for isocitrate, phosphoenolpyruvate, cis-aconitate and to a lesser extent trans-aconitate, maleate and succinate. In the cytoplasm, citrate plays important roles in fatty acid and sterol synthesis, regulation of glycolysis, protein acetylation, and other physiopathological processes. In Homo sapiens (Human), this protein is Tricarboxylate transport protein, mitochondrial (SLC25A1).